We begin with the raw amino-acid sequence, 440 residues long: Thymidine phosphorylase (440 aa).

The protein belongs to the thymidine/pyrimidine-nucleoside phosphorylase family. In terms of assembly, homodimer.

It catalyses the reaction thymidine + phosphate = 2-deoxy-alpha-D-ribose 1-phosphate + thymine. It functions in the pathway pyrimidine metabolism; dTMP biosynthesis via salvage pathway; dTMP from thymine: step 1/2. The enzymes which catalyze the reversible phosphorolysis of pyrimidine nucleosides are involved in the degradation of these compounds and in their utilization as carbon and energy sources, or in the rescue of pyrimidine bases for nucleotide synthesis. This chain is Thymidine phosphorylase, found in Salmonella paratyphi A (strain ATCC 9150 / SARB42).